A 126-amino-acid chain; its full sequence is Histone H2B type 1-P (126 aa).

A disordered region spans residues 1–36 (MPEPVKSVPAPKKGSKKAVTKAQKKDGKKRKRSRKE). P2 carries the N-acetylproline modification. The residue at position 3 (E3) is an ADP-ribosyl glutamic acid. K6 bears the N6-(2-hydroxyisobutyryl)lysine; alternate mark. Residue K6 is modified to N6-(beta-hydroxybutyryl)lysine; alternate. N6-acetyllysine; alternate is present on K6. K6 is modified (N6-butyryllysine; alternate). K6 carries the N6-crotonyllysine; alternate modification. Position 6 is an N6-lactoyllysine; alternate (K6). Residue K6 forms a Glycyl lysine isopeptide (Lys-Gly) (interchain with G-Cter in SUMO2); alternate linkage. S7 carries the ADP-ribosylserine modification. An N6-(beta-hydroxybutyryl)lysine; alternate modification is found at K12. N6-acetyllysine; alternate is present on residues K12 and K13. K12 and K13 each carry N6-crotonyllysine; alternate. K12 is modified (N6-lactoyllysine; alternate). Residue K13 is modified to N6-(2-hydroxyisobutyryl)lysine; alternate. S15 carries the post-translational modification Phosphoserine; by STK4/MST1. Residues K16, K17, K21, and K24 each carry the N6-acetyllysine; alternate modification. N6-crotonyllysine; alternate is present on residues K16, K17, K21, and K24. An N6-lactoyllysine; alternate mark is found at K16, K17, K21, and K24. An N6-glutaryllysine; alternate modification is found at K17. 2 positions are modified to N6-(2-hydroxyisobutyryl)lysine; alternate: K21 and K24. N6-(beta-hydroxybutyryl)lysine; alternate is present on K21. K21 is modified (N6-butyryllysine; alternate). A Glycyl lysine isopeptide (Lys-Gly) (interchain with G-Cter in SUMO2); alternate cross-link involves residue K21. The residue at position 25 (K25) is an N6-(2-hydroxyisobutyryl)lysine. N6-(2-hydroxyisobutyryl)lysine; alternate is present on K35. At K35 the chain carries N6-(beta-hydroxybutyryl)lysine; alternate. K35 is modified (N6-crotonyllysine; alternate). K35 is subject to N6-glutaryllysine; alternate. Residue K35 is modified to N6-succinyllysine; alternate. K35 participates in a covalent cross-link: Glycyl lysine isopeptide (Lys-Gly) (interchain with G-Cter in ubiquitin); alternate. E36 carries the polyADP-ribosyl glutamic acid modification. A Phosphoserine; by AMPK modification is found at S37. Residues K44, K47, and K58 each carry the N6-(2-hydroxyisobutyryl)lysine; alternate modification. Position 44 is an N6-lactoyllysine; alternate (K44). N6-glutaryllysine; alternate occurs at positions 44 and 47. Residue K47 is modified to N6-methyllysine; alternate. An N6,N6-dimethyllysine; alternate modification is found at K58. R80 bears the Dimethylated arginine mark. The residue at position 86 (K86) is an N6-(2-hydroxyisobutyryl)lysine; alternate. An N6-acetyllysine; alternate modification is found at K86. N6-lactoyllysine; alternate is present on K86. K86 is modified (N6,N6,N6-trimethyllysine; alternate). Omega-N-methylarginine is present on residues R87 and R93. The residue at position 109 (K109) is an N6-(2-hydroxyisobutyryl)lysine; alternate. K109 is modified (N6-(beta-hydroxybutyryl)lysine; alternate). K109 carries the post-translational modification N6-lactoyllysine; alternate. K109 is modified (N6-glutaryllysine; alternate). An N6-methyllysine; alternate modification is found at K109. S113 is a glycosylation site (O-linked (GlcNAc) serine). T116 is subject to Phosphothreonine. N6-(2-hydroxyisobutyryl)lysine; alternate is present on residues K117 and K121. K117 is subject to N6-(beta-hydroxybutyryl)lysine; alternate. Residues K117 and K121 each carry the N6-lactoyllysine; alternate modification. Residues K117 and K121 each carry the N6-glutaryllysine; alternate modification. N6-succinyllysine; alternate is present on residues K117 and K121. N6-methylated lysine; alternate is present on K117. K121 participates in a covalent cross-link: Glycyl lysine isopeptide (Lys-Gly) (interchain with G-Cter in ubiquitin); alternate.

It belongs to the histone H2B family. In terms of assembly, the nucleosome is a histone octamer containing two molecules each of H2A, H2B, H3 and H4 assembled in one H3-H4 heterotetramer and two H2A-H2B heterodimers. The octamer wraps approximately 147 bp of DNA. Post-translationally, monoubiquitination at Lys-35 (H2BK34Ub) by the MSL1/MSL2 dimer is required for histone H3 'Lys-4' (H3K4me) and 'Lys-79' (H3K79me) methylation and transcription activation at specific gene loci, such as HOXA9 and MEIS1 loci. Similarly, monoubiquitination at Lys-121 (H2BK120Ub) by the RNF20/40 complex gives a specific tag for epigenetic transcriptional activation and is also prerequisite for histone H3 'Lys-4' and 'Lys-79' methylation. It also functions cooperatively with the FACT dimer to stimulate elongation by RNA polymerase II. H2BK120Ub also acts as a regulator of mRNA splicing: deubiquitination by USP49 is required for efficient cotranscriptional splicing of a large set of exons. In terms of processing, phosphorylated on Ser-15 (H2BS14ph) by STK4/MST1 during apoptosis; which facilitates apoptotic chromatin condensation. Also phosphorylated on Ser-15 in response to DNA double strand breaks (DSBs), and in correlation with somatic hypermutation and immunoglobulin class-switch recombination. Phosphorylation at Ser-37 (H2BS36ph) by AMPK in response to stress promotes transcription. GlcNAcylation at Ser-113 promotes monoubiquitination of Lys-121. It fluctuates in response to extracellular glucose, and associates with transcribed genes. Post-translationally, ADP-ribosylated by PARP1 or PARP2 on Ser-7 (H2BS6ADPr) in response to DNA damage. H2BS6ADPr promotes recruitment of CHD1L. Mono-ADP-ribosylated on Glu-3 (H2BE2ADPr) by PARP3 in response to single-strand breaks. Poly ADP-ribosylation on Glu-36 (H2BE35ADPr) by PARP1 regulates adipogenesis: it inhibits phosphorylation at Ser-37 (H2BS36ph), thereby blocking expression of pro-adipogenetic genes. In terms of processing, crotonylation (Kcr) is specifically present in male germ cells and marks testis-specific genes in post-meiotic cells, including X-linked genes that escape sex chromosome inactivation in haploid cells. Crotonylation marks active promoters and enhancers and confers resistance to transcriptional repressors. It is also associated with post-meiotically activated genes on autosomes. Hydroxybutyrylation of histones is induced by starvation. Post-translationally, lactylated in macrophages by EP300/P300 by using lactoyl-CoA directly derived from endogenous or exogenous lactate, leading to stimulates gene transcription.

The protein resides in the nucleus. It is found in the chromosome. Core component of nucleosome. Nucleosomes wrap and compact DNA into chromatin, limiting DNA accessibility to the cellular machineries which require DNA as a template. Histones thereby play a central role in transcription regulation, DNA repair, DNA replication and chromosomal stability. DNA accessibility is regulated via a complex set of post-translational modifications of histones, also called histone code, and nucleosome remodeling. This is Histone H2B type 1-P (Hist1h2bp) from Mus musculus (Mouse).